The chain runs to 133 residues: C-C motif chemokine 21a (133 aa).

An N-terminal signal peptide occupies residues 1-23; it reads MAQMMTLSLLSLVLALCIPWTQG. 3 cysteine pairs are disulfide-bonded: cysteine 31-cysteine 57, cysteine 32-cysteine 75, and cysteine 103-cysteine 122. Residues 86-133 form a disordered region; it reads LMRRLDQPPAPGKQSPGCRKNRGTSKSGKKGKGSKGCKRTEQTQPSRG. The interval 98 to 133 is C-terminal basic extension; that stretch reads KQSPGCRKNRGTSKSGKKGKGSKGCKRTEQTQPSRG. The segment covering 104-122 has biased composition (basic residues); the sequence is RKNRGTSKSGKKGKGSKGC.

It belongs to the intercrine beta (chemokine CC) family. Binds to CCR7 and to CXCR3. Interacts with PDPN; relocalizes PDPN to the basolateral membrane. Interacts with GPR174. In terms of tissue distribution, expressed strongly in lung, spleen, thymus, peripheral and mesentric lymph nodes. Also expressed in the testis, kidney, liver, and heart.

The protein localises to the secreted. Inhibits hemopoiesis and stimulates chemotaxis. Chemotactic in vitro for thymocytes and activated T-cells, but not for B-cells, macrophages, or neutrophils. Potent mesangial cell chemoattractant. Shows preferential activity towards naive T-cells. May play a role in mediating homing of lymphocytes to secondary lymphoid organs. The polypeptide is C-C motif chemokine 21a (Ccl21a) (Mus musculus (Mouse)).